The sequence spans 685 residues: Protein argonaute (685 aa).

The interval 1 to 99 is N-terminal domain; that stretch reads MNHLGKTEVF…LYPKGRRPLD (99 aa). Residues 100-176 form a linker L1 region; that stretch reads PKDPGERSVL…VDPAYRILCE (77 aa). Residues 169–265 enclose the PAZ domain; it reads PAYRILCEMS…HLTGLLVPVL (97 aa). Positions 272 to 337 are linker L2; it reads EEEGSLALSL…SKPADALRVG (66 aa). The interval 338-463 is mid domain; the sequence is FYRAQETALA…LLAKAGLQVV (126 aa). The interval 464 to 685 is PIWI domain; the sequence is ALSGAYPAEL…EVDREKLFFV (222 aa). Residues Asp478, Glu512, Asp546, and Asp660 contribute to the active site. Residue Asp478 participates in Mn(2+) binding. In terms of domain architecture, Piwi spans 507–671; sequence EAQAGERIPQ…LVKEVGRLGI (165 aa). Mn(2+)-binding residues include Asp546, Asp660, and Val685.

This sequence belongs to the argonaute family. Long pAgo subfamily. Coimmunoprecipitates with a number of proteins involved in DNA replication or recombination including RepA (initiates replication), AddA/B (TT_C0638 and TT_C0639), ArgR, GyrA/B, HU (TT_C0984), PriA, Rad52 (TT_C1923), RecJ, SSB, TopA and UvrB. Most proteins remain associated with TtAgo after DNase treatment and associate with catalytically inactive protein. Mn(2+) serves as cofactor.

Its function is as follows. A DNA-guided ssDNA endonuclease. Uses short ssDNA sequences as guides (gDNA, also called small interfering DNA, siDNA) to bind complementary DNA target strands, resulting in cleavage of the target DNA (tDNA). The cleavage site is 10 nucleotides (nt) downstream of the target residue base-paired with the 5'-end of the gDNA. Plays a role in completion of DNA replication, participates in decatenating replicated DNA and plasmid. In situ purifies with 5'-phosphorylated long DNA (about 1160 nt, maps to the whole chromosome and plasmid), 25-35 nt RNAs that map to the whole chromosome and 15-18 nt DNA that maps to the replication terminus region (ter) on the chromosome and plasmid. Most short DNA starts with dC. Has been shown to have guide sequence-independent dsDNase activity called 'chopping', which requires unstable DNA (high AT-content, multiple mismatches or low salt conditions), and could be used to generate gDNA. Preferentially binds tDNA with dC at its 3'-terminus. Has also been shown to have no detectable guide sequence-independent dsDNase activity. The latter study proposes TtAgo may acquire gDNA from nicked dsDNA, by binding to 5'-phosphorylated-dC nicks, then cleaving 10 nt away on the opposite strand; subsequently an exonuclease (maybe AddA-AddB helicase/nuclease) trims the ends to generate the gDNA. Involved in defense against invading mobile genetic elements. TtAgo interferes with plasmid DNA, stimulates expression of specific endogenous genes, including various CRISPR loci and at least part of the CRISPR adaptation machinery, but only when exogenous plasmid DNA is present. Upon purification from E.coli associates with gDNA 13-25 nt long with 5'-phosphorylated ends and with 10-150 nt RNA with 5'-OH. DNA corresponds to the expression plasmid rather than chromosomal DNA; 89% of gDNA starts with dC and 72% has dA in the second position. Endonucleolytically cleaves tDNA with 5'-phosphorylated gDNA but not 5'-phosphorylated gRNA; the active site is involved in processing or binding of ssDNA. Nicks or linearizes supercoiled plasmid target when it has the appropriate gDNA sequences, does not cleave linear tDNA. Positions 4 to 16 of the tDNA need to be base paired to the gDNA for efficient tDNA cleavage. Although the system can support single nucleotide insertions in either the gDNA or tDNA, in all cases cleavage activity is reduced, with a wide range of sequence- and position-specific effects. Functionally, first characterized as a DNA-guided RNA endonuclease. Uses gDNA to bind complementary RNA target strands, resulting in cleavage of the target RNA. The cleavage site is 10 nucleotides (nt) downstream of the target residue base-paired with the 5'-end of the guide DNA. The sequence is that of Protein argonaute from Thermus thermophilus (strain ATCC BAA-163 / DSM 7039 / HB27).